The sequence spans 186 residues: ATP synthase subunit delta (186 aa).

The protein belongs to the ATPase delta chain family. In terms of assembly, F-type ATPases have 2 components, F(1) - the catalytic core - and F(0) - the membrane proton channel. F(1) has five subunits: alpha(3), beta(3), gamma(1), delta(1), epsilon(1). F(0) has three main subunits: a(1), b(2) and c(10-14). The alpha and beta chains form an alternating ring which encloses part of the gamma chain. F(1) is attached to F(0) by a central stalk formed by the gamma and epsilon chains, while a peripheral stalk is formed by the delta and b chains.

It localises to the cell inner membrane. Functionally, f(1)F(0) ATP synthase produces ATP from ADP in the presence of a proton or sodium gradient. F-type ATPases consist of two structural domains, F(1) containing the extramembraneous catalytic core and F(0) containing the membrane proton channel, linked together by a central stalk and a peripheral stalk. During catalysis, ATP synthesis in the catalytic domain of F(1) is coupled via a rotary mechanism of the central stalk subunits to proton translocation. This protein is part of the stalk that links CF(0) to CF(1). It either transmits conformational changes from CF(0) to CF(1) or is implicated in proton conduction. In Brucella suis biovar 1 (strain 1330), this protein is ATP synthase subunit delta.